The chain runs to 276 residues: NH(3)-dependent NAD(+) synthetase (276 aa).

ATP is bound at residue 47–54 (GISGGQDS). Position 53 (D53) interacts with Mg(2+). R141 lines the deamido-NAD(+) pocket. Position 161 (T161) interacts with ATP. Residue E166 participates in Mg(2+) binding. Deamido-NAD(+) contacts are provided by K174 and D181. ATP-binding residues include K190 and T212. Deamido-NAD(+) is bound at residue 261–262 (HK).

This sequence belongs to the NAD synthetase family. Homodimer.

It catalyses the reaction deamido-NAD(+) + NH4(+) + ATP = AMP + diphosphate + NAD(+) + H(+). It participates in cofactor biosynthesis; NAD(+) biosynthesis; NAD(+) from deamido-NAD(+) (ammonia route): step 1/1. In terms of biological role, catalyzes the ATP-dependent amidation of deamido-NAD to form NAD. Uses ammonia as a nitrogen source. The chain is NH(3)-dependent NAD(+) synthetase from Levilactobacillus brevis (strain ATCC 367 / BCRC 12310 / CIP 105137 / JCM 1170 / LMG 11437 / NCIMB 947 / NCTC 947) (Lactobacillus brevis).